A 483-amino-acid chain; its full sequence is tRNA sulfurtransferase (483 aa).

A THUMP domain is found at 61–165 (EAVCDALTRI…DDKLILVNAR (105 aa)). ATP is bound by residues 183 to 184 (LI), Lys-265, Gly-287, and Gln-296. A disulfide bridge links Cys-344 with Cys-456. The region spanning 404-483 (FATNDVVLDI…FNNVKVYRKK (80 aa)) is the Rhodanese domain. Catalysis depends on Cys-456, which acts as the Cysteine persulfide intermediate.

The protein belongs to the ThiI family.

Its subcellular location is the cytoplasm. The catalysed reaction is [ThiI sulfur-carrier protein]-S-sulfanyl-L-cysteine + a uridine in tRNA + 2 reduced [2Fe-2S]-[ferredoxin] + ATP + H(+) = [ThiI sulfur-carrier protein]-L-cysteine + a 4-thiouridine in tRNA + 2 oxidized [2Fe-2S]-[ferredoxin] + AMP + diphosphate. It catalyses the reaction [ThiS sulfur-carrier protein]-C-terminal Gly-Gly-AMP + S-sulfanyl-L-cysteinyl-[cysteine desulfurase] + AH2 = [ThiS sulfur-carrier protein]-C-terminal-Gly-aminoethanethioate + L-cysteinyl-[cysteine desulfurase] + A + AMP + 2 H(+). It functions in the pathway cofactor biosynthesis; thiamine diphosphate biosynthesis. Catalyzes the ATP-dependent transfer of a sulfur to tRNA to produce 4-thiouridine in position 8 of tRNAs, which functions as a near-UV photosensor. Also catalyzes the transfer of sulfur to the sulfur carrier protein ThiS, forming ThiS-thiocarboxylate. This is a step in the synthesis of thiazole, in the thiamine biosynthesis pathway. The sulfur is donated as persulfide by IscS. This Proteus mirabilis (strain HI4320) protein is tRNA sulfurtransferase.